Here is a 369-residue protein sequence, read N- to C-terminus: Small ribosomal subunit biogenesis GTPase RsgA (369 aa).

Residues 116–271 (GEQLIAANLD…LIDNPGIREI (156 aa)) form the CP-type G domain. Residues 161 to 164 (NKID) and 213 to 221 (GSSGVGKST) contribute to the GTP site. Zn(2+) contacts are provided by C294, C299, H301, and C307.

This sequence belongs to the TRAFAC class YlqF/YawG GTPase family. RsgA subfamily. Monomer. Associates with 30S ribosomal subunit, binds 16S rRNA. Requires Zn(2+) as cofactor.

Its subcellular location is the cytoplasm. One of several proteins that assist in the late maturation steps of the functional core of the 30S ribosomal subunit. Helps release RbfA from mature subunits. May play a role in the assembly of ribosomal proteins into the subunit. Circularly permuted GTPase that catalyzes slow GTP hydrolysis, GTPase activity is stimulated by the 30S ribosomal subunit. This chain is Small ribosomal subunit biogenesis GTPase RsgA, found in Methanosarcina acetivorans (strain ATCC 35395 / DSM 2834 / JCM 12185 / C2A).